The chain runs to 303 residues: Elongation factor Ts (303 aa).

The tract at residues 81-84 (TDFV) is involved in Mg(2+) ion dislocation from EF-Tu.

It belongs to the EF-Ts family.

Its subcellular location is the cytoplasm. Associates with the EF-Tu.GDP complex and induces the exchange of GDP to GTP. It remains bound to the aminoacyl-tRNA.EF-Tu.GTP complex up to the GTP hydrolysis stage on the ribosome. The protein is Elongation factor Ts of Mesomycoplasma hyopneumoniae (strain 7448) (Mycoplasma hyopneumoniae).